We begin with the raw amino-acid sequence, 218 residues long: DNA replication complex GINS protein psf3 (218 aa).

A compositionally biased stretch (gly residues) spans Gly-147–Lys-163. The tract at residues Gly-147–Ala-182 is disordered.

It belongs to the GINS3/PSF3 family. Component of the GINS complex which is a heterotetramer of div-26/sld5, drc-1/psf1, drc-2/psf2 and drc-3/psf3.

It is found in the nucleus. Its function is as follows. The GINS complex plays an essential role in the initiation of DNA replication. The polypeptide is DNA replication complex GINS protein psf3 (drc-3) (Neurospora crassa (strain ATCC 24698 / 74-OR23-1A / CBS 708.71 / DSM 1257 / FGSC 987)).